The sequence spans 256 residues: Pimeloyl-[acyl-carrier protein] methyl ester esterase (256 aa).

Residues 15 to 242 (HLVLLHGWGL…AAHAPFISHP (228 aa)) enclose the AB hydrolase-1 domain. Residues tryptophan 22, 82 to 83 (SL), and 143 to 147 (FLALQ) each bind substrate. The active-site Nucleophile is the serine 82. Residues aspartate 207 and histidine 235 contribute to the active site. Histidine 235 is a substrate binding site.

It belongs to the AB hydrolase superfamily. Carboxylesterase BioH family. In terms of assembly, monomer.

The protein localises to the cytoplasm. It carries out the reaction 6-carboxyhexanoyl-[ACP] methyl ester + H2O = 6-carboxyhexanoyl-[ACP] + methanol + H(+). It functions in the pathway cofactor biosynthesis; biotin biosynthesis. Functionally, the physiological role of BioH is to remove the methyl group introduced by BioC when the pimeloyl moiety is complete. It allows to synthesize pimeloyl-ACP via the fatty acid synthetic pathway through the hydrolysis of the ester bonds of pimeloyl-ACP esters. The polypeptide is Pimeloyl-[acyl-carrier protein] methyl ester esterase (Escherichia coli O8 (strain IAI1)).